Here is a 156-residue protein sequence, read N- to C-terminus: Small ribosomal subunit protein uS7 (156 aa).

The protein belongs to the universal ribosomal protein uS7 family. Part of the 30S ribosomal subunit. Contacts proteins S9 and S11.

Its function is as follows. One of the primary rRNA binding proteins, it binds directly to 16S rRNA where it nucleates assembly of the head domain of the 30S subunit. Is located at the subunit interface close to the decoding center, probably blocks exit of the E-site tRNA. This Geobacter sulfurreducens (strain ATCC 51573 / DSM 12127 / PCA) protein is Small ribosomal subunit protein uS7.